The primary structure comprises 845 residues: MEGSSNSNSRGFNTSGVSDRNTEFLPVERLTTRSKPSSHVDEYVRSLFGSTSTHKSGEDDSLGIDPFVRSLEWGDVSLRQWLDKPERSVDVFECLHVFRQIVEIVNAAHSQGIVVHNVRPSCFVMSSFNHVSFIESASCSDSGSDSLEDGPISQKEIGSSRREEAVSKAIAIEEKGVYNKLLERKIEKLEEEKTQPFPMKHILAMETSWYTSPEEDFGSSSTCASDVYRLGVLLFELFCPVPSREEKSRTMSSLRHRVLPPQILLKCPKEASFCLWLLHPEPTCRPSMSDLLQSEFITEPRDNLEEREAAIELRDRIEEQESLLEFLLLIQQRKQESAYRLQDTVSLLSSDIEQVVKRQLILKKRGSSLSDFSKDDHQYTSGQPLMSFQANEEPSAFLASRKRVRQGILALENGVEVDEESQGSTLLESSRLMRNFKKLESVYFLTRRRQMKAAASGKSLTRHSPLSSENGRGSMIVSEKSSVSNPVAPKAFFNNDSRQGGWIDPFLEGLCRYLSFSQLRVKADLKQGDLLNSSNLVCALAFDREGELFATAGVNKKIKIFECNSIVNDNRDIHYPVVELAGRSKLSSLCWNSYIKSQIASSNFDGVVQIWDVARSQLVTEMKEHKKRVWSIDISSADPTLLASGSDDGTVKLWSINQGVSIGTIKTKANVCCVQFPSDSGRSLAFGSADHKVYYYDLRNPKIPLCTMIGHSKTVSYVKFVDSSTLVSSSTDNTLKLWDLSMSASGINESPLHSFTGHTNLKNFVGLSVSDGYIATGSETNEVFVYHKAFPMPVMSYMFNNTDSMSGLEVDDASQFISSICWRGQSSTLVAANSNGNIKILEMMT.

Positions 1 to 19 (MEGSSNSNSRGFNTSGVSD) are enriched in polar residues. Disordered stretches follow at residues 1-33 (MEGSSNSNSRGFNTSGVSDRNTEFLPVERLTTR) and 139-158 (CSDSGSDSLEDGPISQKEIG). The Protein kinase domain occupies 1–297 (MEGSSNSNSR…MSDLLQSEFI (297 aa)). A coiled-coil region spans residues 301 to 329 (RDNLEEREAAIELRDRIEEQESLLEFLLL). WD repeat units follow at residues 532–571 (NSSNLVCALAFDREGELFATAGVNKKIKIFECNSIVNDNR), 581–621 (AGRS…LVTE), 624–664 (EHKK…SIGT), 666–706 (KTKA…IPLC), 710–748 (GHSKTVSYVKFVDSSTLVSSSTDNTLKLWDLSMSASGIN), 757–796 (GHTNLKNFVGLSVSDGYIATGSETNEVFVYHKAFPMPVMS), and 812–845 (DASQFISSICWRGQSSTLVAANSNGNIKILEMMT). Positions 685–699 (AFGSADHKVYYYDLR) match the DWD box motif.

As to quaternary structure, interacts with COP1 and CO.

It is found in the nucleus. Functionally, repressor of photomorphogenesis in the light. Probably part of the COP1/SPA E3 ubiquitin-protein ligase complex. The sequence is that of Protein SPA1-RELATED 3 (SPA3) from Arabidopsis thaliana (Mouse-ear cress).